A 534-amino-acid polypeptide reads, in one-letter code: NAD(P)H-quinone oxidoreductase chain 4 (534 aa).

Helical transmembrane passes span 12–32 (FPWLSASILFPIGSALVIPFF), 44–64 (FALSIALITFLITVGSYINGF), 96–116 (MPLILLTSFITALAVLAAWPV), 120–140 (PKLFFFLILVMDGGQIAVFAV), 144–164 (LLFFLTWELELIPVYLLLAIW), 176–196 (FIIYTAGSSIFILLAALAMGF), 220–240 (ILCYVGLLIAFGVKLPIVPLH), 251–271 (TAPVHMLLAGILLKMGGYALL), 285–305 (FAPLLIVLGVVNIIYAALTSF), 314–334 (IAYSSISHMGFVLIGIGSFSS), 340–360 (AMLQMVSHGLIGASLFFLVGA), 384–404 (FALWTACSLASLALPGMSGFV), 425–445 (VVMASLAAIGVILTPIYLLSM), and 472–492 (VYIIACLLLPIIGIGLYPRLV).

It belongs to the complex I subunit 4 family.

It is found in the cellular thylakoid membrane. It catalyses the reaction a plastoquinone + NADH + (n+1) H(+)(in) = a plastoquinol + NAD(+) + n H(+)(out). It carries out the reaction a plastoquinone + NADPH + (n+1) H(+)(in) = a plastoquinol + NADP(+) + n H(+)(out). NDH-1 shuttles electrons from NAD(P)H, via FMN and iron-sulfur (Fe-S) centers, to quinones in the respiratory chain. The immediate electron acceptor for the enzyme in this species is believed to be plastoquinone. Couples the redox reaction to proton translocation (for every two electrons transferred, four hydrogen ions are translocated across the cytoplasmic membrane), and thus conserves the redox energy in a proton gradient. In Prochlorococcus marinus (strain MIT 9215), this protein is NAD(P)H-quinone oxidoreductase chain 4.